A 409-amino-acid polypeptide reads, in one-letter code: Immediate early response gene 5-like protein (409 aa).

Disordered stretches follow at residues 168-237 and 312-335; these read QPPH…PSSS and GQEEEDDEEEDAGDLGAEPPGGTP. A compositionally biased stretch (pro residues) spans 184–195; the sequence is QPGPAPLPPPAP. 2 stretches are compositionally biased toward low complexity: residues 196–212 and 220–237; these read AALCPRDPRVPAACSAP and PPTVAASSPPASPAPSSS. Residues 313-324 show a composition bias toward acidic residues; sequence QEEEDDEEEDAG.

This sequence belongs to the IER family.

The sequence is that of Immediate early response gene 5-like protein (Ier5l) from Rattus norvegicus (Rat).